Consider the following 78-residue polypeptide: Cytochrome c-551 (78 aa).

C14, C17, H18, and M55 together coordinate heme c.

In terms of processing, binds 1 heme c group covalently per subunit.

This Halorhodospira halophila (Ectothiorhodospira halophila) protein is Cytochrome c-551.